The sequence spans 1938 residues: Myosin-1 (1938 aa).

A Myosin N-terminal SH3-like domain is found at 33-82 (DAKTSVFVADPKESFVKATVQSREGGKVTAKTEAGATVTVKEDQVFPMNP). A phosphothreonine mark is found at threonine 64 and threonine 69. One can recognise a Myosin motor domain in the interval 86–781 (DKIEDMAMMT…LLGLLEEMRD (696 aa)). Residue lysine 130 is modified to N6,N6,N6-trimethyllysine. Residue 179–186 (GESGAGKT) coordinates ATP. A Phosphotyrosine modification is found at tyrosine 389. Threonine 419 is subject to Phosphothreonine. Tyrosine 424 is subject to Phosphotyrosine. Serine 625 is subject to Phosphoserine. Residues 658–680 (LNKLMTNLRSTHPHFVRCIIPNE) are actin-binding. Histidine 756 is subject to Pros-methylhistidine. The tract at residues 760–774 (KFGHTKVFFKAGLLG) is actin-binding. One can recognise an IQ domain in the interval 784–813 (LAQLITRTQARCRGFLARVEYQKMVERRES). Residues 842–1938 (LLKSAETEKE…EVHTKIISEE (1097 aa)) are a coiled coil. Phosphoserine occurs at positions 1091 and 1095. 2 disordered regions span residues 1124-1146 (EIEA…SREL) and 1152-1171 (RLEE…KKRE). A compositionally biased stretch (basic and acidic residues) spans 1127-1146 (AERASRAKAEKQRSDLSREL). Phosphoserine occurs at positions 1161 and 1236. The residue at position 1240 (threonine 1240) is a Phosphothreonine. Phosphoserine is present on residues serine 1242 and serine 1260. Threonine 1264 and threonine 1285 each carry phosphothreonine. 4 positions are modified to phosphoserine: serine 1287, serine 1291, serine 1302, and serine 1305. The residue at position 1463 (tyrosine 1463) is a Phosphotyrosine. Threonine 1466 is modified (phosphothreonine). Residue serine 1473 is modified to Phosphoserine. A Phosphotyrosine modification is found at tyrosine 1491. Position 1494 is a phosphoserine (serine 1494). Threonine 1500 carries the phosphothreonine modification. Residue serine 1513 is modified to Phosphoserine. Residue threonine 1516 is modified to Phosphothreonine. Phosphoserine is present on residues serine 1541, serine 1553, serine 1573, serine 1599, serine 1602, serine 1713, and serine 1725. 2 positions are modified to phosphothreonine: threonine 1729 and threonine 1735.

The protein belongs to the TRAFAC class myosin-kinesin ATPase superfamily. Myosin family. Muscle myosin is a hexameric protein that consists of 2 heavy chain subunits (MHC), 2 alkali light chain subunits (MLC) and 2 regulatory light chain subunits (MLC-2). Interacts with SLC26A5.

It is found in the cytoplasm. It localises to the myofibril. In terms of biological role, required for normal hearing. It plays a role in cochlear amplification of auditory stimuli, likely through the positive regulation of prestin (SLC26A5) activity and outer hair cell (OHC) electromotility. The chain is Myosin-1 (MYH1) from Bos taurus (Bovine).